Reading from the N-terminus, the 280-residue chain is Probable N-acetyltransferase 14 (280 aa).

A run of 2 helical transmembrane segments spans residues 37–57 and 60–80; these read LILH…LSSI and CVLH…VIYL. The interval 111–152 is disordered; the sequence is PDLPNPHLGRAKLTTNQEKTRRRKKAKEKEKMNESEQVDEDE. The 158-residue stretch at 116 to 273 folds into the N-acetyltransferase domain; sequence PHLGRAKLTT…EKGWLGYPLT (158 aa).

The protein belongs to the camello family.

Its subcellular location is the membrane. Functionally, probable acetyltransferase. The sequence is that of Probable N-acetyltransferase 14 (nat14) from Danio rerio (Zebrafish).